The sequence spans 689 residues: Outer spore wall assembly protein SHE10 (689 aa).

The first 18 residues, 1–18 (MKILTKFFLLLVVTTCSL), serve as a signal peptide directing secretion. The segment at 259-308 (TKAKSKSKPRVNASASARGNARAGAKAGAKAGTSEISASATADPTTSASA) is disordered. Over residues 270 to 308 (NASASARGNARAGAKAGAKAGTSEISASATADPTTSASA) the composition is skewed to low complexity. A coiled-coil region spans residues 406–435 (NKTKTVSEVLQNRYKNLNRAIQDINCTCET). The span at 610–626 (EQESKQREDSPRMDRDS) shows a compositional bias: basic and acidic residues. Residues 610-689 (EQESKQREDS…TVQNNVTLQI (80 aa)) are disordered. 3 stretches are compositionally biased toward polar residues: residues 627–637 (TQNVENSNTTT), 655–670 (QNGTNSTEKFSAGPDS), and 677–689 (METTVQNNVTLQI).

The protein belongs to the SHE10 family. Component of the mitochondria-localized RNase mitochondrial RNA-processing (RNase MRP) composed of one single RNA encoded by the NME1 gene and at least 31 proteins. Absent in the nucleus-localized RNase MRP (NuMRP).

The protein resides in the mitochondrion. Functionally, involved in spore wall assembly. May be a component of the mitochondrial RNase MRP (MtMRP), a ribonucleoprotein endoribonuclease involved in the cleaving RNA transcripts to generate primers for DNA replication in mitochondria. This chain is Outer spore wall assembly protein SHE10, found in Zygosaccharomyces rouxii (strain ATCC 2623 / CBS 732 / NBRC 1130 / NCYC 568 / NRRL Y-229).